The following is a 474-amino-acid chain: Cysteine--tRNA ligase (474 aa).

C27 is a Zn(2+) binding site. A 'HIGH' region motif is present at residues 29–39 (PTVYNYIHIGN). C212, H237, and E241 together coordinate Zn(2+). A 'KMSKS' region motif is present at residues 271–275 (KMSKS). K274 provides a ligand contact to ATP.

This sequence belongs to the class-I aminoacyl-tRNA synthetase family. As to quaternary structure, monomer. The cofactor is Zn(2+).

The protein localises to the cytoplasm. The catalysed reaction is tRNA(Cys) + L-cysteine + ATP = L-cysteinyl-tRNA(Cys) + AMP + diphosphate. The sequence is that of Cysteine--tRNA ligase from Lactobacillus delbrueckii subsp. bulgaricus (strain ATCC BAA-365 / Lb-18).